Consider the following 478-residue polypeptide: 2-succinylbenzoate--CoA ligase (478 aa).

This sequence belongs to the ATP-dependent AMP-binding enzyme family. MenE subfamily.

It carries out the reaction 2-succinylbenzoate + ATP + CoA = 2-succinylbenzoyl-CoA + AMP + diphosphate. It participates in quinol/quinone metabolism; 1,4-dihydroxy-2-naphthoate biosynthesis; 1,4-dihydroxy-2-naphthoate from chorismate: step 5/7. The protein operates within quinol/quinone metabolism; menaquinone biosynthesis. Converts 2-succinylbenzoate (OSB) to 2-succinylbenzoyl-CoA (OSB-CoA). The sequence is that of 2-succinylbenzoate--CoA ligase from Bacillus licheniformis (strain ATCC 14580 / DSM 13 / JCM 2505 / CCUG 7422 / NBRC 12200 / NCIMB 9375 / NCTC 10341 / NRRL NRS-1264 / Gibson 46).